The following is a 154-amino-acid chain: Ribosome maturation factor RimP (154 aa).

Belongs to the RimP family.

It is found in the cytoplasm. Its function is as follows. Required for maturation of 30S ribosomal subunits. The sequence is that of Ribosome maturation factor RimP from Prochlorococcus marinus (strain MIT 9303).